Here is a 126-residue protein sequence, read N- to C-terminus: Holo-[acyl-carrier-protein] synthase (126 aa).

Mg(2+) is bound by residues aspartate 9 and glutamate 58.

This sequence belongs to the P-Pant transferase superfamily. AcpS family. Mg(2+) serves as cofactor.

Its subcellular location is the cytoplasm. It carries out the reaction apo-[ACP] + CoA = holo-[ACP] + adenosine 3',5'-bisphosphate + H(+). Its function is as follows. Transfers the 4'-phosphopantetheine moiety from coenzyme A to a Ser of acyl-carrier-protein. The protein is Holo-[acyl-carrier-protein] synthase of Yersinia pestis bv. Antiqua (strain Angola).